Consider the following 298-residue polypeptide: Protoheme IX farnesyltransferase (298 aa).

Helical transmembrane passes span 26 to 46 (VVSL…PGAV), 52 to 72 (LLGT…NCLV), 93 to 113 (VSVP…LFIL), 120 to 140 (LTMW…TVIL), 148 to 168 (IVIG…AITG), 174 to 194 (ALLL…ALAL), 219 to 239 (LHVL…YLTQ), 241 to 261 (SGLI…YYAI), and 278 to 298 (YSII…YFYF).

The protein belongs to the UbiA prenyltransferase family. Protoheme IX farnesyltransferase subfamily.

It is found in the cell inner membrane. It catalyses the reaction heme b + (2E,6E)-farnesyl diphosphate + H2O = Fe(II)-heme o + diphosphate. It functions in the pathway porphyrin-containing compound metabolism; heme O biosynthesis; heme O from protoheme: step 1/1. In terms of biological role, converts heme B (protoheme IX) to heme O by substitution of the vinyl group on carbon 2 of heme B porphyrin ring with a hydroxyethyl farnesyl side group. This is Protoheme IX farnesyltransferase from Nitrosomonas eutropha (strain DSM 101675 / C91 / Nm57).